Reading from the N-terminus, the 167-residue chain is NAD(P)H-quinone oxidoreductase subunit J (167 aa).

The protein belongs to the complex I 30 kDa subunit family. In terms of assembly, NDH-1 can be composed of about 15 different subunits; different subcomplexes with different compositions have been identified which probably have different functions.

The protein localises to the cellular thylakoid membrane. The enzyme catalyses a plastoquinone + NADH + (n+1) H(+)(in) = a plastoquinol + NAD(+) + n H(+)(out). The catalysed reaction is a plastoquinone + NADPH + (n+1) H(+)(in) = a plastoquinol + NADP(+) + n H(+)(out). Functionally, NDH-1 shuttles electrons from an unknown electron donor, via FMN and iron-sulfur (Fe-S) centers, to quinones in the respiratory and/or the photosynthetic chain. The immediate electron acceptor for the enzyme in this species is believed to be plastoquinone. Couples the redox reaction to proton translocation, and thus conserves the redox energy in a proton gradient. Cyanobacterial NDH-1 also plays a role in inorganic carbon-concentration. In Trichodesmium erythraeum (strain IMS101), this protein is NAD(P)H-quinone oxidoreductase subunit J.